Consider the following 120-residue polypeptide: Small ribosomal subunit protein bS16 (120 aa).

A disordered region spans residues 81–120 (GLAKRPTRNNPQKAEPGEKAKERAAKRAEKAAAPAEDAAA). Positions 95 to 110 (EPGEKAKERAAKRAEK) are enriched in basic and acidic residues. A compositionally biased stretch (low complexity) spans 111-120 (AAAPAEDAAA).

The protein belongs to the bacterial ribosomal protein bS16 family.

The protein is Small ribosomal subunit protein bS16 of Methylorubrum extorquens (strain CM4 / NCIMB 13688) (Methylobacterium extorquens).